Reading from the N-terminus, the 20-residue chain is Dentinal fluid transport-stimulating peptide (20 aa).

The tract at residues 1-20 (GVIAWELQHNEPGRKDSTAG) is disordered. Residues 8-20 (QHNEPGRKDSTAG) are compositionally biased toward basic and acidic residues.

In terms of biological role, this peptide stimulates the transport of dentinal fluid, which is important for the prevention of dental caries. The protein is Dentinal fluid transport-stimulating peptide of Rattus norvegicus (Rat).